The primary structure comprises 586 residues: 2-succinyl-5-enolpyruvyl-6-hydroxy-3-cyclohexene-1-carboxylate synthase (586 aa).

Belongs to the TPP enzyme family. MenD subfamily. As to quaternary structure, homodimer. The cofactor is Mg(2+). Requires Mn(2+) as cofactor. Thiamine diphosphate serves as cofactor.

The catalysed reaction is isochorismate + 2-oxoglutarate + H(+) = 5-enolpyruvoyl-6-hydroxy-2-succinyl-cyclohex-3-ene-1-carboxylate + CO2. It functions in the pathway quinol/quinone metabolism; 1,4-dihydroxy-2-naphthoate biosynthesis; 1,4-dihydroxy-2-naphthoate from chorismate: step 2/7. The protein operates within quinol/quinone metabolism; menaquinone biosynthesis. Functionally, catalyzes the thiamine diphosphate-dependent decarboxylation of 2-oxoglutarate and the subsequent addition of the resulting succinic semialdehyde-thiamine pyrophosphate anion to isochorismate to yield 2-succinyl-5-enolpyruvyl-6-hydroxy-3-cyclohexene-1-carboxylate (SEPHCHC). The protein is 2-succinyl-5-enolpyruvyl-6-hydroxy-3-cyclohexene-1-carboxylate synthase of Geobacillus thermodenitrificans (strain NG80-2).